We begin with the raw amino-acid sequence, 874 residues long: DNA mismatch repair protein MutS (874 aa).

613-620 provides a ligand contact to ATP; sequence GPNMGGKS. The tract at residues 799–820 is disordered; the sequence is EAGSTPSPAPVSVNEPKPAAPT.

It belongs to the DNA mismatch repair MutS family.

This protein is involved in the repair of mismatches in DNA. It is possible that it carries out the mismatch recognition step. This protein has a weak ATPase activity. The protein is DNA mismatch repair protein MutS of Marinobacter nauticus (strain ATCC 700491 / DSM 11845 / VT8) (Marinobacter aquaeolei).